We begin with the raw amino-acid sequence, 252 residues long: MNNDNLHDKLTIWRQQQIELKGMLQLIPKFQSLNEIRYVVGLDISFDKSSPKAVSALVIYDLEQRMIIYKDYLCIEKLEEDYVPGFLSFREIKWYLPLLNHIPHQFRIDIILVDGNGVLHPVGFGLACHLGVLLNLPVVGVAKNYLHCVGLTESLDAHRETLKKHVLKKTTDHPILIHSIDQSSEILGAAVWTSSNSKRPVYVSIGNQMNLEQSIQLVQKCSSSHSRVPEPIRQADIYAKFVLSQSKRNKKN.

Residues Asp-43 and Asp-114 each contribute to the Mg(2+) site.

It belongs to the endonuclease V family.

The protein resides in the cytoplasm. The protein localises to the nucleus. The protein is Putative endonuclease C1F12.06c of Schizosaccharomyces pombe (strain 972 / ATCC 24843) (Fission yeast).